A 246-amino-acid chain; its full sequence is Eukaryotic translation initiation factor 6 (246 aa).

Phosphoserine; by CK1 occurs at positions 174 and 175.

This sequence belongs to the eIF-6 family. As to quaternary structure, monomer. Associates with the 60S ribosomal subunit. Phosphorylation at Ser-174 and Ser-175 promotes nuclear export.

It localises to the cytoplasm. The protein localises to the nucleus. It is found in the nucleolus. Its function is as follows. Binds to the 60S ribosomal subunit and prevents its association with the 40S ribosomal subunit to form the 80S initiation complex in the cytoplasm. Is also involved in ribosome biogenesis. Associates with pre-60S subunits in the nucleus and is involved in its nuclear export. This is Eukaryotic translation initiation factor 6 from Verticillium alfalfae (strain VaMs.102 / ATCC MYA-4576 / FGSC 10136) (Verticillium wilt of alfalfa).